We begin with the raw amino-acid sequence, 278 residues long: Diaminopimelate epimerase (278 aa).

Residues Asn-11 and Asn-63 each coordinate substrate. The active-site Proton donor is the Cys-72. Substrate contacts are provided by residues 73–74 (GN), Asn-160, Asn-193, and 211–212 (ER). Cys-220 acts as the Proton acceptor in catalysis. Position 221 to 222 (221 to 222 (GT)) interacts with substrate.

This sequence belongs to the diaminopimelate epimerase family. Homodimer.

Its subcellular location is the cytoplasm. It catalyses the reaction (2S,6S)-2,6-diaminopimelate = meso-2,6-diaminopimelate. Its pathway is amino-acid biosynthesis; L-lysine biosynthesis via DAP pathway; DL-2,6-diaminopimelate from LL-2,6-diaminopimelate: step 1/1. Catalyzes the stereoinversion of LL-2,6-diaminopimelate (L,L-DAP) to meso-diaminopimelate (meso-DAP), a precursor of L-lysine and an essential component of the bacterial peptidoglycan. This chain is Diaminopimelate epimerase, found in Desulforudis audaxviator (strain MP104C).